The chain runs to 367 residues: Peptide chain release factor 2 (367 aa).

Q250 bears the N5-methylglutamine mark.

The protein belongs to the prokaryotic/mitochondrial release factor family. Post-translationally, methylated by PrmC. Methylation increases the termination efficiency of RF2.

Its subcellular location is the cytoplasm. Its function is as follows. Peptide chain release factor 2 directs the termination of translation in response to the peptide chain termination codons UGA and UAA. The sequence is that of Peptide chain release factor 2 from Saccharopolyspora erythraea (strain ATCC 11635 / DSM 40517 / JCM 4748 / NBRC 13426 / NCIMB 8594 / NRRL 2338).